The sequence spans 574 residues: Type II methyltransferase M.PaeR7I (574 aa).

Belongs to the N(4)/N(6)-methyltransferase family. As to quaternary structure, monomer.

The enzyme catalyses a 2'-deoxyadenosine in DNA + S-adenosyl-L-methionine = an N(6)-methyl-2'-deoxyadenosine in DNA + S-adenosyl-L-homocysteine + H(+). In terms of biological role, a gamma subtype methylase, recognizes the double-stranded sequence 5'-CTCGAG-3', methylates A-5 on both strands, and protects the DNA from cleavage by the PaeR7I endonuclease. The protein is Type II methyltransferase M.PaeR7I (paeR7IM) of Pseudomonas aeruginosa.